A 421-amino-acid polypeptide reads, in one-letter code: BEN domain-containing protein 5 (421 aa).

Lys133 is subject to N6-acetyllysine. The stretch at 180-243 forms a coiled coil; that stretch reads RALYEELLRN…LNRRLQDVLL (64 aa). Lys258 is covalently cross-linked (Glycyl lysine isopeptide (Lys-Gly) (interchain with G-Cter in SUMO2)). One can recognise a BEN domain in the interval 302–408; sequence GSGIWVDEEK…EKIMDINKSC (107 aa).

In terms of biological role, acts as a transcriptional repressor. The chain is BEN domain-containing protein 5 (Bend5) from Mus musculus (Mouse).